A 101-amino-acid chain; its full sequence is Protein Tat (101 aa).

The disordered stretch occupies residues 1–20 (MEVVDPNLDPWKHPGSQPET). Residues 1-24 (MEVVDPNLDPWKHPGSQPETPCNK) are interaction with human CREBBP. A transactivation region spans residues 1 to 48 (MEVVDPNLDPWKHPGSQPETPCNKCYCKKCCFHCQLCFTRKGLGISYG). Zn(2+)-binding residues include cysteine 22, cysteine 25, and cysteine 27. Residues 22 to 37 (CNKCYCKKCCFHCQLC) are cysteine-rich. The residue at position 28 (lysine 28) is an N6-acetyllysine; by host PCAF. Residues cysteine 30, histidine 33, cysteine 34, and cysteine 37 each contribute to the Zn(2+) site. The segment at 38–48 (FTRKGLGISYG) is core. Residues 47 to 101 (YGRKKRRQRRRTPQSGEVHQDPVSKQPLSQTRGDPKGPEESKKKVESKTKTDPSD) are disordered. Over residues 48–58 (GRKKRRQRRRT) the composition is skewed to basic residues. Residues 49-57 (RKKRRQRRR) carry the Nuclear localization signal, RNA-binding (TAR), and protein transduction motif. The interaction with the host capping enzyme RNGTT stretch occupies residues 49 to 86 (RKKRRQRRRTPQSGEVHQDPVSKQPLSQTRGDPKGPEE). N6-acetyllysine; by host EP300 and GCN5L2 is present on residues lysine 50 and lysine 51. Arginine 52 and arginine 53 each carry asymmetric dimethylarginine; by host PRMT6. Lysine 71 is covalently cross-linked (Glycyl lysine isopeptide (Lys-Gly) (interchain with G-Cter in ubiquitin)). The short motif at 78 to 80 (RGD) is the Cell attachment site element. The segment covering 79-101 (GDPKGPEESKKKVESKTKTDPSD) has biased composition (basic and acidic residues).

This sequence belongs to the lentiviruses Tat family. As to quaternary structure, interacts with host CCNT1. Associates with the P-TEFb complex composed at least of Tat, P-TEFb (CDK9 and CCNT1), TAR RNA, RNA Pol II. Recruits the HATs CREBBP, TAF1/TFIID, EP300, PCAF and GCN5L2. Interacts with host KAT5/Tip60; this interaction targets the latter to degradation. Interacts with the host deacetylase SIRT1. Interacts with host capping enzyme RNGTT; this interaction stimulates RNGTT. Binds to host KDR, and to the host integrins ITGAV/ITGB3 and ITGA5/ITGB1. Interacts with host KPNB1/importin beta-1 without previous binding to KPNA1/importin alpha-1. Interacts with EIF2AK2. Interacts with host nucleosome assembly protein NAP1L1; this interaction may be required for the transport of Tat within the nucleus, since the two proteins interact at the nuclear rim. Interacts with host C1QBP/SF2P32; this interaction involves lysine-acetylated Tat. Interacts with the host chemokine receptors CCR2, CCR3 and CXCR4. Interacts with host DPP4/CD26; this interaction may trigger an anti-proliferative effect. Interacts with host LDLR. Interacts with the host extracellular matrix metalloproteinase MMP1. Interacts with host PRMT6; this interaction mediates Tat's methylation. Interacts with, and is ubiquitinated by MDM2/Hdm2. Interacts with host PSMC3 and HTATIP2. Interacts with STAB1; this interaction may overcome SATB1-mediated repression of IL2 and IL2RA (interleukin) in T cells by binding to the same domain than HDAC1. Interacts (when acetylated) with human CDK13, thereby increasing HIV-1 mRNA splicing and promoting the production of the doubly spliced HIV-1 protein Nef. Interacts with host TBP; this interaction modulates the activity of transcriptional pre-initiation complex. Interacts with host RELA. Interacts with host PLSCR1; this interaction negatively regulates Tat transactivation activity by altering its subcellular distribution. Post-translationally, asymmetrical arginine methylation by host PRMT6 seems to diminish the transactivation capacity of Tat and affects the interaction with host CCNT1. In terms of processing, acetylation by EP300, CREBBP, GCN5L2/GCN5 and PCAF regulates the transactivation activity of Tat. EP300-mediated acetylation of Lys-50 promotes dissociation of Tat from the TAR RNA through the competitive binding to PCAF's bromodomain. In addition, the non-acetylated Tat's N-terminus can also interact with PCAF. PCAF-mediated acetylation of Lys-28 enhances Tat's binding to CCNT1. Lys-50 is deacetylated by SIRT1. Polyubiquitination by host MDM2 does not target Tat to degradation, but activates its transactivation function and fosters interaction with CCNT1 and TAR RNA. Post-translationally, phosphorylated by EIF2AK2 on serine and threonine residues adjacent to the basic region important for TAR RNA binding and function. Phosphorylation of Tat by EIF2AK2 is dependent on the prior activation of EIF2AK2 by dsRNA.

The protein resides in the host nucleus. The protein localises to the host nucleolus. It is found in the host cytoplasm. Its subcellular location is the secreted. Its function is as follows. Transcriptional activator that increases RNA Pol II processivity, thereby increasing the level of full-length viral transcripts. Recognizes a hairpin structure at the 5'-LTR of the nascent viral mRNAs referred to as the transactivation responsive RNA element (TAR) and recruits the cyclin T1-CDK9 complex (P-TEFb complex) that will in turn hyperphosphorylate the RNA polymerase II to allow efficient elongation. The CDK9 component of P-TEFb and other Tat-activated kinases hyperphosphorylate the C-terminus of RNA Pol II that becomes stabilized and much more processive. Other factors such as HTATSF1/Tat-SF1, SUPT5H/SPT5, and HTATIP2 are also important for Tat's function. Besides its effect on RNA Pol II processivity, Tat induces chromatin remodeling of proviral genes by recruiting the histone acetyltransferases (HATs) CREBBP, EP300 and PCAF to the chromatin. This also contributes to the increase in proviral transcription rate, especially when the provirus integrates in transcriptionally silent region of the host genome. To ensure maximal activation of the LTR, Tat mediates nuclear translocation of NF-kappa-B by interacting with host RELA. Through its interaction with host TBP, Tat may also modulate transcription initiation. Tat can reactivate a latently infected cell by penetrating in it and transactivating its LTR promoter. In the cytoplasm, Tat is thought to act as a translational activator of HIV-1 mRNAs. In terms of biological role, extracellular circulating Tat can be endocytosed by surrounding uninfected cells via the binding to several surface receptors such as CD26, CXCR4, heparan sulfate proteoglycans (HSPG) or LDLR. Neurons are rarely infected, but they internalize Tat via their LDLR. Through its interaction with nuclear HATs, Tat is potentially able to control the acetylation-dependent cellular gene expression. Modulates the expression of many cellular genes involved in cell survival, proliferation or in coding for cytokines or cytokine receptors. Tat plays a role in T-cell and neurons apoptosis. Tat induced neurotoxicity and apoptosis probably contribute to neuroAIDS. Circulating Tat also acts as a chemokine-like and/or growth factor-like molecule that binds to specific receptors on the surface of the cells, affecting many cellular pathways. In the vascular system, Tat binds to ITGAV/ITGB3 and ITGA5/ITGB1 integrins dimers at the surface of endothelial cells and competes with bFGF for heparin-binding sites, leading to an excess of soluble bFGF. This Homo sapiens (Human) protein is Protein Tat.